Here is a 756-residue protein sequence, read N- to C-terminus: Pro-neuregulin-2, membrane-bound isoform (756 aa).

Residues 1-19 (MRRDPAPGFSMLLFGVSLA) constitute a propeptide that is removed on maturation. The Extracellular segment spans residues 20–315 (CYSPSLKSVQ…KEAEELYQKR (296 aa)). 3 N-linked (GlcNAc...) asparagine glycosylation sites follow: N55, N186, and N254. The Ig-like C2-type domain maps to 145-240 (PKLKKMKSQT…RGRLHVNSVS (96 aa)). Intrachain disulfides connect C165/C219, C253/C267, C261/C278, and C280/C289. The EGF-like domain occupies 249-290 (HARKCNETAKSYCVNGGVCYYIEGINQLSCKCPVGYTGDRCQ). An N-linked (GlcNAc...) asparagine glycan is attached at N296. A helical transmembrane segment spans residues 316-336 (VLTITGICVALLVVGIVCVVA). Residues 337 to 756 (YCKTKKQRRQ…TRAKQDSGPL (420 aa)) are Cytoplasmic-facing. Disordered stretches follow at residues 402-439 (TFSG…SESL), 557-578 (LLRH…DMQR), 608-694 (ASPF…DGAL), and 711-756 (LRSD…SGPL). Over residues 404-416 (SGSHSCSPSHHCS) the composition is skewed to low complexity. Basic and acidic residues predominate over residues 424 to 437 (HRHESHTWSLERSE). Positions 654 to 682 (LNGLAAQRARAARDSLSLSSGSGCGSASA) are enriched in low complexity.

This sequence belongs to the neuregulin family. In terms of assembly, interacts with ERBB3 and ERBB4. Post-translationally, proteolytic cleavage close to the plasma membrane on the external face leads to the release of the soluble growth factor form. Extensive glycosylation precedes the proteolytic cleavage. As to expression, highest expression in the brain, with lower levels in the lung. In the cerebellum, found in granule and Purkinje cells.

The protein resides in the cell membrane. The protein localises to the secreted. Functionally, direct ligand for ERBB3 and ERBB4 tyrosine kinase receptors. Concomitantly recruits ERBB1 and ERBB2 coreceptors, resulting in ligand-stimulated tyrosine phosphorylation and activation of the ERBB receptors. May also promote the heterodimerization with the EGF receptor. This chain is Pro-neuregulin-2, membrane-bound isoform (Nrg2), found in Mus musculus (Mouse).